We begin with the raw amino-acid sequence, 304 residues long: Acetyl-coenzyme A carboxylase carboxyl transferase subunit beta (304 aa).

The CoA carboxyltransferase N-terminal domain occupies 29-298 (LWSKCESCGA…ASDVSPAAVP (270 aa)). Residues cysteine 33, cysteine 36, cysteine 52, and cysteine 55 each coordinate Zn(2+). The C4-type zinc-finger motif lies at 33-55 (CESCGALTYTKDLRANQMVCLEC).

This sequence belongs to the AccD/PCCB family. In terms of assembly, acetyl-CoA carboxylase is a heterohexamer composed of biotin carboxyl carrier protein (AccB), biotin carboxylase (AccC) and two subunits each of ACCase subunit alpha (AccA) and ACCase subunit beta (AccD). Zn(2+) serves as cofactor.

It is found in the cytoplasm. The enzyme catalyses N(6)-carboxybiotinyl-L-lysyl-[protein] + acetyl-CoA = N(6)-biotinyl-L-lysyl-[protein] + malonyl-CoA. The protein operates within lipid metabolism; malonyl-CoA biosynthesis; malonyl-CoA from acetyl-CoA: step 1/1. Component of the acetyl coenzyme A carboxylase (ACC) complex. Biotin carboxylase (BC) catalyzes the carboxylation of biotin on its carrier protein (BCCP) and then the CO(2) group is transferred by the transcarboxylase to acetyl-CoA to form malonyl-CoA. The chain is Acetyl-coenzyme A carboxylase carboxyl transferase subunit beta from Acaryochloris marina (strain MBIC 11017).